The following is a 226-amino-acid chain: MGQKVHPNGIRLGISRPWNATWYANTNEFADNLHSDFQVRKFLNKELRNASVSRIVIDRPAKSVRVTIHTARPGVVIGKKGEDVEKLRKQVSKLTGAPAQINISEVRKPELDSQLVADNIAGQLERRVMFRRAMKRAVQNAIRLGAKGIKVEVSGRLGGAEIARTEWYREGRVPLHTLRADIDYSTSEANTTYGIIGVKVWIFRGEVLGGLPTEEKPAPKRGKNRK.

Positions 39–107 constitute a KH type-2 domain; the sequence is VRKFLNKELR…PAQINISEVR (69 aa).

This sequence belongs to the universal ribosomal protein uS3 family. Part of the 30S ribosomal subunit. Forms a tight complex with proteins S10 and S14.

Binds the lower part of the 30S subunit head. Binds mRNA in the 70S ribosome, positioning it for translation. This chain is Small ribosomal subunit protein uS3, found in Idiomarina loihiensis (strain ATCC BAA-735 / DSM 15497 / L2-TR).